A 182-amino-acid chain; its full sequence is Large ribosomal subunit protein bL25 (182 aa).

This sequence belongs to the bacterial ribosomal protein bL25 family. CTC subfamily. As to quaternary structure, part of the 50S ribosomal subunit; part of the 5S rRNA/L5/L18/L25 subcomplex. Contacts the 5S rRNA. Binds to the 5S rRNA independently of L5 and L18.

Functionally, this is one of the proteins that binds to the 5S RNA in the ribosome where it forms part of the central protuberance. The sequence is that of Large ribosomal subunit protein bL25 from Borrelia garinii subsp. bavariensis (strain ATCC BAA-2496 / DSM 23469 / PBi) (Borreliella bavariensis).